Reading from the N-terminus, the 419-residue chain is UDP-N-acetylglucosamine 1-carboxyvinyltransferase (419 aa).

22–23 serves as a coordination point for phosphoenolpyruvate; the sequence is KN. R91 contributes to the UDP-N-acetyl-alpha-D-glucosamine binding site. C115 acts as the Proton donor in catalysis. C115 is modified (2-(S-cysteinyl)pyruvic acid O-phosphothioketal). Residues 120–124, 160–163, D305, and V327 contribute to the UDP-N-acetyl-alpha-D-glucosamine site; these read RPVDL and KVSV.

Belongs to the EPSP synthase family. MurA subfamily.

The protein resides in the cytoplasm. The enzyme catalyses phosphoenolpyruvate + UDP-N-acetyl-alpha-D-glucosamine = UDP-N-acetyl-3-O-(1-carboxyvinyl)-alpha-D-glucosamine + phosphate. The protein operates within cell wall biogenesis; peptidoglycan biosynthesis. Functionally, cell wall formation. Adds enolpyruvyl to UDP-N-acetylglucosamine. The protein is UDP-N-acetylglucosamine 1-carboxyvinyltransferase of Salmonella gallinarum (strain 287/91 / NCTC 13346).